The following is a 286-amino-acid chain: Bifunctional protein FolD (286 aa).

NADP(+) contacts are provided by residues 166–168 (GRS) and Ser-191.

It belongs to the tetrahydrofolate dehydrogenase/cyclohydrolase family. As to quaternary structure, homodimer.

It carries out the reaction (6R)-5,10-methylene-5,6,7,8-tetrahydrofolate + NADP(+) = (6R)-5,10-methenyltetrahydrofolate + NADPH. The catalysed reaction is (6R)-5,10-methenyltetrahydrofolate + H2O = (6R)-10-formyltetrahydrofolate + H(+). It participates in one-carbon metabolism; tetrahydrofolate interconversion. Catalyzes the oxidation of 5,10-methylenetetrahydrofolate to 5,10-methenyltetrahydrofolate and then the hydrolysis of 5,10-methenyltetrahydrofolate to 10-formyltetrahydrofolate. This Lactiplantibacillus plantarum (strain ATCC BAA-793 / NCIMB 8826 / WCFS1) (Lactobacillus plantarum) protein is Bifunctional protein FolD.